A 142-amino-acid chain; its full sequence is uncharacterized protein (142 aa).

The protein belongs to the GlcG family.

This is an uncharacterized protein from Citrobacter freundii.